Here is a 200-residue protein sequence, read N- to C-terminus: Holliday junction resolvase RecU (200 aa).

Residues 1–25 (MTIRYPNGKRYNQASQPQKTPIKTH) are disordered. The segment covering 10–25 (RYNQASQPQKTPIKTH) has biased composition (polar residues). Residues Thr-85, Asp-87, Glu-100, and Gln-119 each coordinate Mg(2+).

The protein belongs to the RecU family. Mg(2+) serves as cofactor.

The protein resides in the cytoplasm. The enzyme catalyses Endonucleolytic cleavage at a junction such as a reciprocal single-stranded crossover between two homologous DNA duplexes (Holliday junction).. Endonuclease that resolves Holliday junction intermediates in genetic recombination. Cleaves mobile four-strand junctions by introducing symmetrical nicks in paired strands. Promotes annealing of linear ssDNA with homologous dsDNA. Required for DNA repair, homologous recombination and chromosome segregation. This Bacillus cereus (strain B4264) protein is Holliday junction resolvase RecU.